The chain runs to 1064 residues: Lysine-specific demethylase 4A (1064 aa).

A2 is modified (N-acetylalanine). Residues 14–56 (IMTFYPTMEEFRNFSRYIAYIESQGAHRAGLAKVVPPKEWKPR) form the JmjN domain. Residue Y132 participates in 2-oxoglutarate binding. One can recognise a JmjC domain in the interval 142-308 (EQHVDEWNIG…YGKQAVLCSC (167 aa)). 2 residues coordinate Fe cation: H188 and E190. 2-oxoglutarate is bound by residues N198 and K206. Residues C234 and H240 each contribute to the Zn(2+) site. Position 241 (K241) interacts with 2-oxoglutarate. Residue H276 coordinates Fe cation. Residues C306 and C308 each coordinate Zn(2+). Disordered regions lie at residues 354-384 (LKDS…EEGD), 434-489 (LAPV…LDLS), 502-537 (SGSK…QGQE), 549-573 (RGDG…SISE), and 590-643 (NKKT…LSQL). Positions 368-382 (ECPEEDVEAADQGEE) are enriched in acidic residues. Residues 460 to 472 (TEVKFEELKNVKL) show a composition bias toward basic and acidic residues. A compositionally biased stretch (acidic residues) spans 473–482 (EEEDEEDEPE). A compositionally biased stretch (low complexity) spans 509–525 (SSSLGSTSSQDSVSSDS). Residue S523 is modified to Phosphoserine. Residues 528–537 (AESVSCQGQE) show a composition bias toward polar residues. Residues 593-608 (TKGRRQPLSKLPRHHP) show a composition bias toward basic residues. The segment at 597–638 (RQPLSKLPRHHPLVLQECGSDDETSEQLTPEEEAEETEAWAK) is interaction with NCOR1. The span at 615–634 (GSDDETSEQLTPEEEAEETE) shows a compositional bias: acidic residues. The PHD-type 1 zinc-finger motif lies at 709-767 (MCFTTTGCSTDINLSTPYLEEDGTSMLVSCKKCSVRVHASCYGVPPAKASEEWMCSRCS). A C2HC pre-PHD-type zinc finger spans residues 772-805 (EEDCCLCSLRGGALQRANDDRWVHVSCAVAILEA). A PHD-type 2 zinc finger spans residues 828 to 885 (LKCVFCKKRRKRNAGCCVQCSHGRCPTAFHVSCAQAAGVMMQPDDWPFVVFITCFRHK). Tudor domains are found at residues 897 to 954 (LSIT…CLQL) and 955 to 1011 (GPPA…EELP).

This sequence belongs to the JHDM3 histone demethylase family. Interacts with histone deacetylase proteins HDAC1, HDAC2 and HDAC3. Interacts with RB and NCOR1. Interacts with VRK1. Requires Fe(2+) as cofactor. Post-translationally, ubiquitinated by RNF8 and RNF168, leading to its degradation. Degradation promotes accessibility of H4K20me2 mark for DNA repair protein TP53BP1, which is then recruited. Also ubiquitinated by the SCF(FBXO22) complex; leading to proteasomal degradation. Widely expressed.

It is found in the nucleus. The enzyme catalyses N(6),N(6),N(6)-trimethyl-L-lysyl(9)-[histone H3] + 2 2-oxoglutarate + 2 O2 = N(6)-methyl-L-lysyl(9)-[histone H3] + 2 formaldehyde + 2 succinate + 2 CO2. It carries out the reaction N(6),N(6),N(6)-trimethyl-L-lysyl(36)-[histone H3] + 2 2-oxoglutarate + 2 O2 = N(6)-methyl-L-lysyl(36)-[histone H3] + 2 formaldehyde + 2 succinate + 2 CO2. In terms of biological role, histone demethylase that specifically demethylates 'Lys-9' and 'Lys-36' residues of histone H3, thereby playing a central role in histone code. Does not demethylate histone H3 'Lys-4', H3 'Lys-27' nor H4 'Lys-20'. Demethylates trimethylated H3 'Lys-9' and H3 'Lys-36' residue, while it has no activity on mono- and dimethylated residues. Demethylation of Lys residue generates formaldehyde and succinate. Participates in transcriptional repression of ASCL2 and E2F-responsive promoters via the recruitment of histone deacetylases and NCOR1, respectively. This Mus musculus (Mouse) protein is Lysine-specific demethylase 4A (Kdm4a).